A 222-amino-acid polypeptide reads, in one-letter code: Superoxide dismutase [Mn], mitochondrial (222 aa).

The transit peptide at 1 to 24 (MLSRAACSTSRRLVPALSVLGSRQ) directs the protein to the mitochondrion. His-50 provides a ligand contact to Mn(2+). The residue at position 58 (Tyr-58) is a 3'-nitrotyrosine. Residues Lys-68 and Lys-75 each carry the N6-acetyllysine; alternate modification. 2 positions are modified to N6-succinyllysine; alternate: Lys-68 and Lys-75. His-98 contributes to the Mn(2+) binding site. N6-acetyllysine; alternate is present on residues Lys-122 and Lys-130. N6-succinyllysine; alternate is present on residues Lys-122 and Lys-130. Asp-183 and His-187 together coordinate Mn(2+). Lys-202 bears the N6-acetyllysine mark.

The protein belongs to the iron/manganese superoxide dismutase family. As to quaternary structure, homotetramer. The cofactor is Mn(2+). Post-translationally, nitrated under oxidative stress. Nitration coupled with oxidation inhibits the catalytic activity. In terms of processing, acetylation at Lys-122 decreases enzymatic activity. Deacetylated by SIRT3 upon exposure to ionizing radiations or after long fasting. Polyubiquitinated; leading to proteasomal degradation. Deubiquitinated by USP36 which increases protein stability.

The protein localises to the mitochondrion matrix. It carries out the reaction 2 superoxide + 2 H(+) = H2O2 + O2. Its function is as follows. Destroys superoxide anion radicals which are normally produced within the cells and which are toxic to biological systems. This Bos taurus (Bovine) protein is Superoxide dismutase [Mn], mitochondrial (SOD2).